The following is a 194-amino-acid chain: Coiled-coil domain-containing protein 184 (194 aa).

Residues 39 to 68 (GMKELMEHLKAQLQALFEDVRAMRGALDEQ) are a coiled coil. Positions 101-176 (GLGVVGGKGS…LLGGDGPLVE (76 aa)) are disordered. Residues 135 to 145 (PEDEEEEEEEK) show a composition bias toward acidic residues.

The chain is Coiled-coil domain-containing protein 184 (CCDC184) from Homo sapiens (Human).